A 182-amino-acid chain; its full sequence is Peptidyl-prolyl cis-trans isomerase C, mitochondrial (182 aa).

The transit peptide at M1–L20 directs the protein to the mitochondrion. The region spanning F25 to E181 is the PPIase cyclophilin-type domain.

This sequence belongs to the cyclophilin-type PPIase family.

It localises to the mitochondrion matrix. It catalyses the reaction [protein]-peptidylproline (omega=180) = [protein]-peptidylproline (omega=0). With respect to regulation, inhibited by the immunosuppressant drug cyclosporin A and by SDZ NIM811, a PPIase inhibitor. Functionally, PPIases accelerate the folding of proteins. It catalyzes the cis-trans isomerization of proline imidic peptide bonds in oligopeptides. This isozyme is required for growth on lactate at high temperature. This Saccharomyces cerevisiae (strain ATCC 204508 / S288c) (Baker's yeast) protein is Peptidyl-prolyl cis-trans isomerase C, mitochondrial (CPR3).